The chain runs to 339 residues: Transposase for insertion sequence element IS1086 (339 aa).

In terms of domain architecture, Integrase catalytic spans 176-329 (DRLMPGHWEG…SPLQVLAQVL (154 aa)).

The protein belongs to the transposase IS30 family.

Required for the transposition of the insertion element. The polypeptide is Transposase for insertion sequence element IS1086 (IS1086) (Cupriavidus metallidurans (strain ATCC 43123 / DSM 2839 / NBRC 102507 / CH34) (Ralstonia metallidurans)).